Here is a 320-residue protein sequence, read N- to C-terminus: MAISSRNTLLAALAFIAFQAQAVNVTVAYQTSAEPAKVAQADNTFAKESGATVDWRKFDSGASIVRALASGDVQIGNLGSSPLAVAASQQVPIEVFLLASKLGNSEALVVKKTISKPEDLIGKRIAVPFISTTHYSLLAALKHWGIKPGQVEIVNLQPPAIIAAWQRGDIDGAYVWAPAVNALEKDGKVLTDSEQVGQWGAPTLDVWVVRKDFAEKHPEVVKAFAKSAIDAQQPYIANPDVWLKQPENISKLARLSGVPEGDVPGLVKGNTYLTPQQQTAELTGPVNKAIIDTAQFLKEQGKVPAVANDYSQYVTSRFVQ.

A signal peptide spans 1-22 (MAISSRNTLLAALAFIAFQAQA).

It belongs to the bacterial solute-binding protein SsuA/TauA family.

It is found in the periplasm. Part of a binding-protein-dependent transport system for taurine. In Escherichia coli (strain K12), this protein is Taurine-binding periplasmic protein (tauA).